We begin with the raw amino-acid sequence, 200 residues long: dITP/XTP pyrophosphatase (200 aa).

7 to 12 serves as a coordination point for substrate; the sequence is TQNKRK. Mg(2+) contacts are provided by Glu42 and Asp71. The Proton acceptor role is filled by Asp71. Residues Ser72, 156 to 159, Lys179, and 184 to 185 each bind substrate; these read FGYD and HR.

This sequence belongs to the HAM1 NTPase family. In terms of assembly, homodimer. It depends on Mg(2+) as a cofactor.

It catalyses the reaction XTP + H2O = XMP + diphosphate + H(+). The catalysed reaction is dITP + H2O = dIMP + diphosphate + H(+). The enzyme catalyses ITP + H2O = IMP + diphosphate + H(+). Pyrophosphatase that catalyzes the hydrolysis of nucleoside triphosphates to their monophosphate derivatives, with a high preference for the non-canonical purine nucleotides XTP (xanthosine triphosphate), dITP (deoxyinosine triphosphate) and ITP. Seems to function as a house-cleaning enzyme that removes non-canonical purine nucleotides from the nucleotide pool, thus preventing their incorporation into DNA/RNA and avoiding chromosomal lesions. In Malacoplasma penetrans (strain HF-2) (Mycoplasma penetrans), this protein is dITP/XTP pyrophosphatase.